The following is a 184-amino-acid chain: Protein PLANT CADMIUM RESISTANCE 5 (184 aa).

Positions 1 to 26 (MGRPVGQTNQAQPSVQHTASPSNKVS) are enriched in polar residues. The tract at residues 1 to 33 (MGRPVGQTNQAQPSVQHTASPSNKVSHNGGIGK) is disordered. Residues 94 to 114 (AGLLYGALFFTGASFVYSYMF) form a helical membrane-spanning segment.

This sequence belongs to the cornifelin family.

It is found in the membrane. Functionally, may be involved in heavy metals transport. The polypeptide is Protein PLANT CADMIUM RESISTANCE 5 (PCR5) (Arabidopsis thaliana (Mouse-ear cress)).